The primary structure comprises 397 residues: Phosphoglycerate kinase (397 aa).

Residues 21–23, Arg37, 60–63, Arg119, and Arg152 contribute to the substrate site; these read DFN and HLGR. Residues Lys203, Gly294, Glu325, and 354-357 contribute to the ATP site; that span reads GGDS.

The protein belongs to the phosphoglycerate kinase family. As to quaternary structure, monomer.

It localises to the cytoplasm. It carries out the reaction (2R)-3-phosphoglycerate + ATP = (2R)-3-phospho-glyceroyl phosphate + ADP. The protein operates within carbohydrate degradation; glycolysis; pyruvate from D-glyceraldehyde 3-phosphate: step 2/5. In Chlorobium chlorochromatii (strain CaD3), this protein is Phosphoglycerate kinase.